A 347-amino-acid chain; its full sequence is Haptoglobin (347 aa).

Residues 1–18 form the signal peptide; sequence MSALGAVIALLLWGQLFA. The region spanning 31 to 88 is the Sushi domain; sequence DGCPKPPQIAHGYVEHSVRYQCKNYYRLRTEGDGVYTLNSEKQWINKAVGDKLPECEA. Intrachain disulfides connect cysteine 52-cysteine 86, cysteine 90-cysteine 207, cysteine 250-cysteine 281, and cysteine 292-cysteine 322. Positions 103 to 347 constitute a Peptidase S1 domain; the sequence is ILGGHLDAKG…DWVQKTIAKN (245 aa). Residues asparagine 125, asparagine 148, asparagine 152, and asparagine 182 are each glycosylated (N-linked (GlcNAc...) asparagine). The interaction with CD163 stretch occupies residues 259–264; it reads VPEKKT.

The protein belongs to the peptidase S1 family. In terms of assembly, tetramer of two alpha and two beta chains; disulfide-linked. The hemoglobin/haptoglobin complex is composed of a haptoglobin dimer bound to two hemoglobin alpha-beta dimers. Interacts with CD163. Interacts with ERGIC3.

It localises to the secreted. Functionally, as a result of hemolysis, hemoglobin is found to accumulate in the kidney and is secreted in the urine. Haptoglobin captures, and combines with free plasma hemoglobin to allow hepatic recycling of heme iron and to prevent kidney damage. Haptoglobin also acts as an antioxidant, has antibacterial activity and plays a role in modulating many aspects of the acute phase response. Hemoglobin/haptoglobin complexes are rapidly cleared by the macrophage CD163 scavenger receptor expressed on the surface of liver Kupfer cells through an endocytic lysosomal degradation pathway. This Pongo abelii (Sumatran orangutan) protein is Haptoglobin (HP).